Consider the following 395-residue polypeptide: Elongation factor Tu (395 aa).

Residues 10-204 (KPHVNVGTIG…AVDAYIDTPL (195 aa)) form the tr-type G domain. Positions 19–26 (GHVDHGKT) are G1. 19–26 (GHVDHGKT) serves as a coordination point for GTP. Mg(2+) is bound at residue threonine 26. The interval 60 to 64 (GITIN) is G2. The interval 81–84 (DCPG) is G3. GTP is bound by residues 81 to 85 (DCPGH) and 136 to 139 (NKAD). Positions 136-139 (NKAD) are G4. A G5 region spans residues 174 to 176 (SAL).

It belongs to the TRAFAC class translation factor GTPase superfamily. Classic translation factor GTPase family. EF-Tu/EF-1A subfamily. Monomer.

The protein resides in the cytoplasm. The catalysed reaction is GTP + H2O = GDP + phosphate + H(+). GTP hydrolase that promotes the GTP-dependent binding of aminoacyl-tRNA to the A-site of ribosomes during protein biosynthesis. This is Elongation factor Tu from Acholeplasma laidlawii (strain PG-8A).